The following is a 436-amino-acid chain: Probable 4-aminobutyrate aminotransferase (436 aa).

Residue K281 is modified to N6-(pyridoxal phosphate)lysine.

This sequence belongs to the class-III pyridoxal-phosphate-dependent aminotransferase family. Pyridoxal 5'-phosphate serves as cofactor.

The catalysed reaction is 4-aminobutanoate + 2-oxoglutarate = succinate semialdehyde + L-glutamate. The enzyme catalyses (S)-3-amino-2-methylpropanoate + 2-oxoglutarate = 2-methyl-3-oxopropanoate + L-glutamate. It functions in the pathway amino-acid degradation; 4-aminobutanoate degradation. The chain is Probable 4-aminobutyrate aminotransferase (gabT) from Bacillus subtilis (strain 168).